We begin with the raw amino-acid sequence, 425 residues long: Serine--tRNA ligase (425 aa).

An L-serine-binding site is contributed by 230 to 232 (TAE). 261-263 (RSE) lines the ATP pocket. L-serine is bound at residue glutamate 284. 348 to 351 (EISS) contacts ATP. Position 384 (serine 384) interacts with L-serine.

The protein belongs to the class-II aminoacyl-tRNA synthetase family. Type-1 seryl-tRNA synthetase subfamily. As to quaternary structure, homodimer. The tRNA molecule binds across the dimer.

It localises to the cytoplasm. The catalysed reaction is tRNA(Ser) + L-serine + ATP = L-seryl-tRNA(Ser) + AMP + diphosphate + H(+). The enzyme catalyses tRNA(Sec) + L-serine + ATP = L-seryl-tRNA(Sec) + AMP + diphosphate + H(+). The protein operates within aminoacyl-tRNA biosynthesis; selenocysteinyl-tRNA(Sec) biosynthesis; L-seryl-tRNA(Sec) from L-serine and tRNA(Sec): step 1/1. Functionally, catalyzes the attachment of serine to tRNA(Ser). Is also able to aminoacylate tRNA(Sec) with serine, to form the misacylated tRNA L-seryl-tRNA(Sec), which will be further converted into selenocysteinyl-tRNA(Sec). This chain is Serine--tRNA ligase, found in Streptococcus gordonii (strain Challis / ATCC 35105 / BCRC 15272 / CH1 / DL1 / V288).